Here is a 281-residue protein sequence, read N- to C-terminus: E3 ubiquitin-protein ligase MARCHF5 (281 aa).

The RING-CH-type zinc finger occupies 9–78; it reads LPQTMDRSCW…PQCNAEYLIV (70 aa). Zn(2+) is bound by residues Cys17, Cys20, Cys36, Cys38, His46, Cys49, Cys68, and Cys71. Helical transmembrane passes span 102–122, 142–162, 212–232, and 241–261; these read FAAAGIMVGSIYWTAVTYGAV, PLFLLIGLPTIPVMLILGKMI, ILCGALVFPTIATIVGKLMFS, and TILGGIAFVAIKGAFKVYFKQ.

It localises to the mitochondrion outer membrane. It is found in the endoplasmic reticulum membrane. It catalyses the reaction S-ubiquitinyl-[E2 ubiquitin-conjugating enzyme]-L-cysteine + [acceptor protein]-L-lysine = [E2 ubiquitin-conjugating enzyme]-L-cysteine + N(6)-ubiquitinyl-[acceptor protein]-L-lysine.. The protein operates within protein modification; protein ubiquitination. Functionally, mitochondrial E3 ubiquitin-protein ligase that plays a crucial role in the control of mitochondrial morphology by acting as a positive regulator of mitochondrial fission. May play a role in the prevention of cell senescence acting as a regulator of mitochondrial quality control. This chain is E3 ubiquitin-protein ligase MARCHF5 (MARCHF5), found in Gallus gallus (Chicken).